The sequence spans 463 residues: Glycerol-3-phosphate acyltransferase, chloroplastic (463 aa).

The transit peptide at 1–91 directs the protein to the chloroplast; it reads MSIFFSPSSP…AATQPSAGSD (91 aa). Disordered stretches follow at residues 18–37 and 65–95; these read NANP…TPPL and AETV…HGHS. Composition is skewed to low complexity over residues 24-37 and 74-90; these read SPSS…TPPL and PSPS…SAGS. The short motif at 229–234 is the HXXXXD motif element; the sequence is HQTEAD.

It belongs to the GPAT/DAPAT family.

The protein localises to the plastid. Its subcellular location is the chloroplast stroma. It catalyses the reaction sn-glycerol 3-phosphate + an acyl-CoA = a 1-acyl-sn-glycero-3-phosphate + CoA. The protein operates within phospholipid metabolism; CDP-diacylglycerol biosynthesis; CDP-diacylglycerol from sn-glycerol 3-phosphate: step 1/3. Its function is as follows. Esterifies acyl-group from acyl-ACP to the sn-1 position of glycerol-3-phosphate. The enzyme from chilling-resistant plants discriminates against non-fluid palmitic acid and selects oleic acid whereas the enzyme from sensitive plants accepts both fatty acids. This chain is Glycerol-3-phosphate acyltransferase, chloroplastic, found in Carthamus tinctorius (Safflower).